The following is a 1179-amino-acid chain: DNA-directed RNA polymerase subunit beta (1179 aa).

Positions 1153 to 1162 (MREMEDEDEG) are enriched in acidic residues. The tract at residues 1153 to 1179 (MREMEDEDEGNGEKLNLVLEGGSLNEE) is disordered.

This sequence belongs to the RNA polymerase beta chain family. The RNAP catalytic core consists of 2 alpha, 1 beta, 1 beta' and 1 omega subunit. When a sigma factor is associated with the core the holoenzyme is formed, which can initiate transcription.

The enzyme catalyses RNA(n) + a ribonucleoside 5'-triphosphate = RNA(n+1) + diphosphate. In terms of biological role, DNA-dependent RNA polymerase catalyzes the transcription of DNA into RNA using the four ribonucleoside triphosphates as substrates. This is DNA-directed RNA polymerase subunit beta from Brevibacillus brevis (strain 47 / JCM 6285 / NBRC 100599).